Reading from the N-terminus, the 704-residue chain is DNA ligase (704 aa).

NAD(+) is bound by residues 43–47, 92–93, and glutamate 124; these read DADYD and SL. The N6-AMP-lysine intermediate role is filled by lysine 126. Residues arginine 147, glutamate 182, lysine 298, and lysine 322 each coordinate NAD(+). Zn(2+) is bound by residues cysteine 427, cysteine 430, cysteine 445, and cysteine 451. The BRCT domain occupies 625–704; the sequence is PVESPIAGKI…DAWLRLIGDA (80 aa).

The protein belongs to the NAD-dependent DNA ligase family. LigA subfamily. The cofactor is Mg(2+). Mn(2+) is required as a cofactor.

It catalyses the reaction NAD(+) + (deoxyribonucleotide)n-3'-hydroxyl + 5'-phospho-(deoxyribonucleotide)m = (deoxyribonucleotide)n+m + AMP + beta-nicotinamide D-nucleotide.. Its function is as follows. DNA ligase that catalyzes the formation of phosphodiester linkages between 5'-phosphoryl and 3'-hydroxyl groups in double-stranded DNA using NAD as a coenzyme and as the energy source for the reaction. It is essential for DNA replication and repair of damaged DNA. The sequence is that of DNA ligase from Cereibacter sphaeroides (strain ATCC 17025 / ATH 2.4.3) (Rhodobacter sphaeroides).